A 387-amino-acid polypeptide reads, in one-letter code: 3-ketoacyl-CoA thiolase (387 aa).

The active-site Acyl-thioester intermediate is Cys-91. Catalysis depends on proton acceptor residues His-343 and Cys-373.

Belongs to the thiolase-like superfamily. Thiolase family. As to quaternary structure, heterotetramer of two alpha chains (FadB) and two beta chains (FadA).

The protein resides in the cytoplasm. It catalyses the reaction an acyl-CoA + acetyl-CoA = a 3-oxoacyl-CoA + CoA. It functions in the pathway lipid metabolism; fatty acid beta-oxidation. Functionally, catalyzes the final step of fatty acid oxidation in which acetyl-CoA is released and the CoA ester of a fatty acid two carbons shorter is formed. The polypeptide is 3-ketoacyl-CoA thiolase (Aliivibrio fischeri (strain ATCC 700601 / ES114) (Vibrio fischeri)).